We begin with the raw amino-acid sequence, 464 residues long: Argininosuccinate lyase (464 aa).

Belongs to the lyase 1 family. Argininosuccinate lyase subfamily.

Its subcellular location is the cytoplasm. It carries out the reaction 2-(N(omega)-L-arginino)succinate = fumarate + L-arginine. It participates in amino-acid biosynthesis; L-arginine biosynthesis; L-arginine from L-ornithine and carbamoyl phosphate: step 3/3. The sequence is that of Argininosuccinate lyase from Pseudomonas fluorescens (strain ATCC BAA-477 / NRRL B-23932 / Pf-5).